We begin with the raw amino-acid sequence, 133 residues long: Large-conductance mechanosensitive channel (133 aa).

2 helical membrane-spanning segments follow: residues 14–34 and 67–87; these read VIDL…VSSL and GNFI…FMFV.

It belongs to the MscL family. In terms of assembly, homopentamer.

The protein localises to the cell membrane. Functionally, channel that opens in response to stretch forces in the membrane lipid bilayer. May participate in the regulation of osmotic pressure changes within the cell. This Bacillus mycoides (strain KBAB4) (Bacillus weihenstephanensis) protein is Large-conductance mechanosensitive channel.